An 815-amino-acid polypeptide reads, in one-letter code: Bifunctional purine biosynthetic protein purD (815 aa).

A GARS region spans residues 6–452; sequence NILVIGSGSR…YRKDIGQKAL (447 aa). The ATP-grasp domain maps to 113 to 343; sequence KDFMARNNIP…LFEIVLACIE (231 aa). 139–200 is an ATP binding site; that stretch reads IESLNYKIVL…EEFLDGEECS (62 aa). Glu313 and Asn315 together coordinate Mg(2+). The interval 469–801 is AIRS; it reads VSYSESGVDI…KVYKIGKIIN (333 aa).

The protein in the N-terminal section; belongs to the GARS family. It in the C-terminal section; belongs to the AIR synthase family. Mg(2+) serves as cofactor. It depends on Mn(2+) as a cofactor.

The protein resides in the cytoplasm. It localises to the cytosol. It catalyses the reaction 5-phospho-beta-D-ribosylamine + glycine + ATP = N(1)-(5-phospho-beta-D-ribosyl)glycinamide + ADP + phosphate + H(+). The catalysed reaction is 2-formamido-N(1)-(5-O-phospho-beta-D-ribosyl)acetamidine + ATP = 5-amino-1-(5-phospho-beta-D-ribosyl)imidazole + ADP + phosphate + H(+). Its pathway is purine metabolism; IMP biosynthesis via de novo pathway; 5-amino-1-(5-phospho-D-ribosyl)imidazole from N(2)-formyl-N(1)-(5-phospho-D-ribosyl)glycinamide: step 2/2. The protein operates within purine metabolism; IMP biosynthesis via de novo pathway; N(1)-(5-phospho-D-ribosyl)glycinamide from 5-phospho-alpha-D-ribose 1-diphosphate: step 2/2. In terms of biological role, catalyzes the second and fifth step in the 'de novo' purine biosynthesis pathway; contains phosphoribosylamine--glycine ligase (GARS) and phosphoribosylformylglycinamidine cyclo-ligase (AIRS) activities. The chain is Bifunctional purine biosynthetic protein purD (purD) from Dictyostelium discoideum (Social amoeba).